A 397-amino-acid polypeptide reads, in one-letter code: Cysteine desulfurase IscS (397 aa).

Pyridoxal 5'-phosphate is bound by residues 72-73 (GS), Asn-152, Gln-180, and 200-202 (SAH). Lys-203 carries the post-translational modification N6-(pyridoxal phosphate)lysine. Residue Thr-238 participates in pyridoxal 5'-phosphate binding. Cys-328 functions as the Cysteine persulfide intermediate in the catalytic mechanism. Cys-328 contributes to the [2Fe-2S] cluster binding site.

It belongs to the class-V pyridoxal-phosphate-dependent aminotransferase family. NifS/IscS subfamily. As to quaternary structure, homodimer. Forms a heterotetramer with IscU, interacts with other sulfur acceptors. Pyridoxal 5'-phosphate serves as cofactor.

It is found in the cytoplasm. It catalyses the reaction (sulfur carrier)-H + L-cysteine = (sulfur carrier)-SH + L-alanine. Its pathway is cofactor biosynthesis; iron-sulfur cluster biosynthesis. Master enzyme that delivers sulfur to a number of partners involved in Fe-S cluster assembly, tRNA modification or cofactor biosynthesis. Catalyzes the removal of elemental sulfur atoms from cysteine to produce alanine. Functions as a sulfur delivery protein for Fe-S cluster synthesis onto IscU, an Fe-S scaffold assembly protein, as well as other S acceptor proteins. The polypeptide is Cysteine desulfurase IscS (Clostridium botulinum (strain ATCC 19397 / Type A)).